We begin with the raw amino-acid sequence, 216 residues long: Pyridoxine/pyridoxamine 5'-phosphate oxidase (216 aa).

Substrate-binding positions include 12–15 (RREY) and lysine 70. FMN contacts are provided by residues 65–70 (RVVLLK), 80–81 (YT), arginine 86, lysine 87, and glutamine 109. Substrate-binding residues include tyrosine 127 and arginine 131. Residues 144–145 (QS) and tryptophan 189 each bind FMN. Substrate is bound at residue 195-197 (RLH). Arginine 199 contacts FMN.

The protein belongs to the pyridoxamine 5'-phosphate oxidase family. In terms of assembly, homodimer. The cofactor is FMN.

The catalysed reaction is pyridoxamine 5'-phosphate + O2 + H2O = pyridoxal 5'-phosphate + H2O2 + NH4(+). It carries out the reaction pyridoxine 5'-phosphate + O2 = pyridoxal 5'-phosphate + H2O2. Its pathway is cofactor metabolism; pyridoxal 5'-phosphate salvage; pyridoxal 5'-phosphate from pyridoxamine 5'-phosphate: step 1/1. It functions in the pathway cofactor metabolism; pyridoxal 5'-phosphate salvage; pyridoxal 5'-phosphate from pyridoxine 5'-phosphate: step 1/1. Functionally, catalyzes the oxidation of either pyridoxine 5'-phosphate (PNP) or pyridoxamine 5'-phosphate (PMP) into pyridoxal 5'-phosphate (PLP). The sequence is that of Pyridoxine/pyridoxamine 5'-phosphate oxidase from Blochmanniella pennsylvanica (strain BPEN).